Reading from the N-terminus, the 468-residue chain is Argininosuccinate lyase (468 aa).

Belongs to the lyase 1 family. Argininosuccinate lyase subfamily.

Its subcellular location is the cytoplasm. The catalysed reaction is 2-(N(omega)-L-arginino)succinate = fumarate + L-arginine. It participates in amino-acid biosynthesis; L-arginine biosynthesis; L-arginine from L-ornithine and carbamoyl phosphate: step 3/3. The protein is Argininosuccinate lyase of Sphingopyxis alaskensis (strain DSM 13593 / LMG 18877 / RB2256) (Sphingomonas alaskensis).